The chain runs to 545 residues: Probable bifunctional tRNA threonylcarbamoyladenosine biosynthesis protein (545 aa).

A kae1 region spans residues 1–329 (MKNTFILGIE…YRTDDVKVTW (329 aa)). Histidine 113, histidine 117, and tyrosine 134 together coordinate Fe cation. Residues 134 to 138 (YVSGA), aspartate 166, glycine 179, glutamate 183, and asparagine 262 each bind L-threonylcarbamoyladenylate. Aspartate 290 is a binding site for Fe cation. The 206-residue stretch at 340–545 (EISPGTSLKL…EEIKKRARYA (206 aa)) folds into the Protein kinase domain. Residues 353–361 (LDNGAEAIV) and lysine 375 contribute to the ATP site. Aspartate 462 functions as the Proton acceptor; for kinase activity in the catalytic mechanism.

It in the N-terminal section; belongs to the KAE1 / TsaD family. This sequence in the C-terminal section; belongs to the protein kinase superfamily. Tyr protein kinase family. BUD32 subfamily. In terms of assembly, component of the KEOPS complex that consists of Kae1, Bud32, Cgi121 and Pcc1; the whole complex dimerizes. Fe(2+) is required as a cofactor.

The protein localises to the cytoplasm. It catalyses the reaction L-seryl-[protein] + ATP = O-phospho-L-seryl-[protein] + ADP + H(+). The catalysed reaction is L-threonyl-[protein] + ATP = O-phospho-L-threonyl-[protein] + ADP + H(+). It carries out the reaction L-threonylcarbamoyladenylate + adenosine(37) in tRNA = N(6)-L-threonylcarbamoyladenosine(37) in tRNA + AMP + H(+). In terms of biological role, required for the formation of a threonylcarbamoyl group on adenosine at position 37 (t(6)A37) in tRNAs that read codons beginning with adenine. Is a component of the KEOPS complex that is probably involved in the transfer of the threonylcarbamoyl moiety of threonylcarbamoyl-AMP (TC-AMP) to the N6 group of A37. The Kae1 domain likely plays a direct catalytic role in this reaction. The Bud32 domain probably displays kinase activity that regulates Kae1 function. The chain is Probable bifunctional tRNA threonylcarbamoyladenosine biosynthesis protein from Methanosarcina barkeri (strain Fusaro / DSM 804).